Consider the following 383-residue polypeptide: Large ribosomal subunit protein uL2m (383 aa).

2 disordered regions span residues 97-122 and 322-357; these read FPKKGQSKGGRNHSGRVTVRHRGGGH and MNANDHPHGGGRGKSKGNRHPVSPWGTPAKGGYKTR. 2 stretches are compositionally biased toward basic residues: residues 106–122 and 330–340; these read GRNHSGRVTVRHRGGGH and GGGRGKSKGNR.

It belongs to the universal ribosomal protein uL2 family. Component of the mitochondrial large ribosomal subunit (mt-LSU). Mature N.crassa 74S mitochondrial ribosomes consist of a small (37S) and a large (54S) subunit. The 37S small subunit contains a 16S ribosomal RNA (16S mt-rRNA) and 32 different proteins. The 54S large subunit contains a 23S rRNA (23S mt-rRNA) and 42 different proteins.

The protein localises to the mitochondrion. Component of the mitochondrial ribosome (mitoribosome), a dedicated translation machinery responsible for the synthesis of mitochondrial genome-encoded proteins, including at least some of the essential transmembrane subunits of the mitochondrial respiratory chain. The mitoribosomes are attached to the mitochondrial inner membrane and translation products are cotranslationally integrated into the membrane. The polypeptide is Large ribosomal subunit protein uL2m (rml2) (Neurospora crassa (strain ATCC 24698 / 74-OR23-1A / CBS 708.71 / DSM 1257 / FGSC 987)).